The following is a 166-amino-acid chain: Co-chaperone protein HscB homolog (166 aa).

In terms of domain architecture, J spans 3–75 (QYFTLFRIEP…IDRAAYLLKT (73 aa)).

This sequence belongs to the HscB family. In terms of assembly, interacts with HscA and stimulates its ATPase activity.

Functionally, co-chaperone involved in the maturation of iron-sulfur cluster-containing proteins. Seems to help targeting proteins to be folded toward HscA. The chain is Co-chaperone protein HscB homolog from Neisseria meningitidis serogroup A / serotype 4A (strain DSM 15465 / Z2491).